Reading from the N-terminus, the 122-residue chain is MIINESYLNVADNSGAKLLRVIRVMGGSRRKWGTVGDIVVCSVRDAVPNGDLKKGDVVKAVIVRTKKEIRRPDGSYIRFDDNAAVVLDKYNEPKGTRVFGPVAKELREKGFMKIVSLAPEVF.

Belongs to the universal ribosomal protein uL14 family. In terms of assembly, part of the 50S ribosomal subunit. Forms a cluster with proteins L3 and L19. In the 70S ribosome, L14 and L19 interact and together make contacts with the 16S rRNA in bridges B5 and B8.

Functionally, binds to 23S rRNA. Forms part of two intersubunit bridges in the 70S ribosome. The protein is Large ribosomal subunit protein uL14 of Thermosipho melanesiensis (strain DSM 12029 / CIP 104789 / BI429).